We begin with the raw amino-acid sequence, 364 residues long: MQESGLKPILWKNKELILLDQRVLPGTTSYITAKTLEDCIFAIREMVVRGAPAIAITGAFGITLYWNSLVSKPSFSELKLKLSELLESRPTAVNLRLAIEEFSSRFPESNYSSFSLEEIQKGAEELALFMLSEDLENNLTLSKYALSLFPKQPSSLNIITHCNTGALATAGHGTALGVIRSLRDAGHSLTVFADETRPYLQGARLTAWELQEEKIQSFLITDNMAGWVMSSRKIDAVIVGADRIASNGDTANKIGTYPLAIVAKHHGVPFYVAATAKSMDFRIPNGSYIPIEMRKEEEITSFGFLKDSDGKPLLKEGVIAPKGMKALNPSFDVTPASLITGIITEKGIVSPVTEENLKKIFQSI.

Residues 49–51 (RGA), Arg89, and Gln201 contribute to the substrate site. Asp242 serves as the catalytic Proton donor. 252–253 (NK) is a substrate binding site.

This sequence belongs to the eIF-2B alpha/beta/delta subunits family. MtnA subfamily.

The enzyme catalyses 5-(methylsulfanyl)-alpha-D-ribose 1-phosphate = 5-(methylsulfanyl)-D-ribulose 1-phosphate. It functions in the pathway amino-acid biosynthesis; L-methionine biosynthesis via salvage pathway; L-methionine from S-methyl-5-thio-alpha-D-ribose 1-phosphate: step 1/6. Catalyzes the interconversion of methylthioribose-1-phosphate (MTR-1-P) into methylthioribulose-1-phosphate (MTRu-1-P). The polypeptide is Methylthioribose-1-phosphate isomerase (Leptospira interrogans serogroup Icterohaemorrhagiae serovar copenhageni (strain Fiocruz L1-130)).